The following is a 252-amino-acid chain: Putative cytosolic acyl coenzyme A thioester hydrolase-like (252 aa).

2 HotDog ACOT-type domains span residues 1-90 (MIKE…LSLT) and 146-252 (SYSQ…SVFT).

As to quaternary structure, homodimer. Expressed in all tissues examined. Up-regulated in nasopharyngeal carcinoma (at protein level).

Its subcellular location is the cytoplasm. The catalysed reaction is hexadecanoyl-CoA + H2O = hexadecanoate + CoA + H(+). In terms of biological role, acyl-CoA thioesterases are a group of enzymes that catalyze the hydrolysis of acyl-CoAs to the free fatty acid and coenzyme A (CoASH), providing the potential to regulate intracellular levels of acyl-CoAs, free fatty acids and CoASH. The protein is Putative cytosolic acyl coenzyme A thioester hydrolase-like (ACOT7L) of Homo sapiens (Human).